Reading from the N-terminus, the 730-residue chain is Catalase-peroxidase 1 (730 aa).

A disordered region spans residues 1 to 24 (MQEKGKCPVTGMTKHKTSGGTTNQ). Residues 95–218 (WHSAGTYRMG…LAAVQMGLIY (124 aa)) constitute a cross-link (tryptophyl-tyrosyl-methioninium (Trp-Tyr) (with M-244)). His-96 acts as the Proton acceptor in catalysis. The tryptophyl-tyrosyl-methioninium (Tyr-Met) (with W-95) cross-link spans 218-244 (YVNPEGPNGQPSALASGKDIRDTFARM). Residue His-259 coordinates heme b.

Belongs to the peroxidase family. Peroxidase/catalase subfamily. In terms of assembly, homodimer or homotetramer. The cofactor is heme b. Post-translationally, formation of the three residue Trp-Tyr-Met cross-link is important for the catalase, but not the peroxidase activity of the enzyme.

It catalyses the reaction H2O2 + AH2 = A + 2 H2O. The enzyme catalyses 2 H2O2 = O2 + 2 H2O. Bifunctional enzyme with both catalase and broad-spectrum peroxidase activity. This Alkaliphilus metalliredigens (strain QYMF) protein is Catalase-peroxidase 1.